A 203-amino-acid polypeptide reads, in one-letter code: MKRLYLVRHAQSEYNEKGIFQGRLDSDLTPLGFVQARLLAREFLKKKVDIIYSSPQRRAYKTALTISDMLGTQLVVDERLREMSFGEYEGKHFWSMLEAHKDVFLNWLSNPVKHPLPTQESMEEFEKRVRSFLEDVKSSHYQNMLIVAHGGTLHAIVCLLTGIGLENLWNIHMDNAGITEIHMEGEKSTLVYLNKLCHTRQLT.

Histidine 9 acts as the Tele-phosphohistidine intermediate in catalysis. The active site involves histidine 149.

It belongs to the histidine phosphatase superfamily. Metal-independent phosphoserine phosphatase family. Heterodimer with PspA. The PspB subunit appears to have no or considerably lower PSP activity compared with that of PspA.

It catalyses the reaction O-phospho-L-serine + H2O = L-serine + phosphate. The catalysed reaction is O-phospho-D-serine + H2O = D-serine + phosphate. The protein operates within amino-acid biosynthesis; L-serine biosynthesis; L-serine from 3-phospho-D-glycerate: step 3/3. With respect to regulation, activity is not inhibited by EDTA in vitro, nor enhanced by the addition of Mg(2+). Functionally, part of a complex that catalyzes the dephosphorylation of L-phosphoserine to serine and inorganic phosphate. Is poorly or not active toward D-phosphoserine, DL-phosphothreonine, 3-phosphoglycerate, para-nitrophenylphosphate, and fructose-6-phosphate. Does not display phosphoglycerate mutase activity. The sequence is that of Putative phosphoserine phosphatase 2 (pspB) from Hydrogenobacter thermophilus (strain DSM 6534 / IAM 12695 / TK-6).